The sequence spans 1162 residues: Spike glycoprotein (1162 aa).

An N-terminal signal peptide occupies residues Met-1–Ala-18. Residues Val-19 to Tyr-1095 lie on the Extracellular side of the membrane. Residues Asn-51, Asn-77, Asn-103, Asn-144, Asn-163, Asn-178, Asn-212, Asn-237, Asn-247, Asn-264, Asn-276, Asn-306, Asn-425, Asn-447, Asn-513, Asn-530, Asn-579, Asn-591, Asn-669, Asn-676, and Asn-714 are each glycosylated (N-linked (GlcNAc...) asparagine; by host). The segment at Ile-769 to Leu-874 is heptad repeat 1 (HR1). Positions Gln-822–Val-866 form a coiled coil. 7 N-linked (GlcNAc...) asparagine; by host glycosylation sites follow: Asn-947, Asn-960, Asn-979, Asn-1014, Asn-1038, Asn-1051, and Asn-1074. The interval Asn-1024–Ile-1105 is heptad repeat 2 (HR2). A coiled-coil region spans residues Pro-1055–Leu-1083. The helical transmembrane segment at Val-1096–Phe-1116 threads the bilayer. At Met-1117–Val-1162 the chain is on the cytoplasmic side. The Di-lysine motif motif lies at Lys-1159–Val-1162.

It belongs to the gammacoronaviruses spike protein family. Homotrimer; each monomer consists of a S1 and a S2 subunit. The resulting peplomers protrude from the virus surface as spikes. In terms of processing, specific enzymatic cleavages in vivo yield mature proteins. The precursor is processed into S1 and S2 by host cell furin or furin-like protease to yield the mature S1 and S2 proteins. The cleavage site between S1 and S2 requires the optimal sequence [KR]-X-[KR]-R. Additionally, a second cleavage leads to the release of a fusion peptide after viral attachment to host cell receptor.

The protein resides in the virion membrane. Its subcellular location is the host endoplasmic reticulum-Golgi intermediate compartment membrane. Attaches the virion to the host cell membrane by interacting with sialic acids, initiating the infection. Functionally, mediates fusion of the virion and cellular membranes by acting as a class I viral fusion protein. Under the current model, the protein has at least 3 conformational states: pre-fusion native state, pre-hairpin intermediate state, and post-fusion hairpin state. During viral and target cell membrane fusion, the coiled coil regions (heptad repeats) assume a trimer-of-hairpins structure, positioning the fusion peptide in close proximity to the C-terminal region of the ectodomain. The formation of this structure appears to drive apposition and subsequent fusion of viral and target cell membranes. Its function is as follows. Acts as a viral fusion peptide after S2 cleavage occurring upon virus endocytosis. The chain is Spike glycoprotein from Avian infectious bronchitis virus (strain Beaudette) (IBV).